The chain runs to 119 residues: Ribonuclease P protein component (119 aa).

The protein belongs to the RnpA family. In terms of assembly, consists of a catalytic RNA component (M1 or rnpB) and a protein subunit.

It carries out the reaction Endonucleolytic cleavage of RNA, removing 5'-extranucleotides from tRNA precursor.. Functionally, RNaseP catalyzes the removal of the 5'-leader sequence from pre-tRNA to produce the mature 5'-terminus. It can also cleave other RNA substrates such as 4.5S RNA. The protein component plays an auxiliary but essential role in vivo by binding to the 5'-leader sequence and broadening the substrate specificity of the ribozyme. This is Ribonuclease P protein component from Streptococcus equi subsp. zooepidemicus (strain MGCS10565).